Consider the following 181-residue polypeptide: Regulator of G-protein signaling 10 (181 aa).

Residues 1–35 are disordered; the sequence is MFTRAVSRLSRKRPPSDIHDGDGSSSSGHQSLKST. A phosphoserine mark is found at serine 24 and serine 41. The RGS domain maps to 41-156; sequence SLENLLEDPE…LKSDLFLKPK (116 aa). Cysteine 74 is lipidated: S-palmitoyl cysteine. Residues 155–181 form a disordered region; it reads PKRTEEEEEEPPDAQTAAKRASRIYNT. Serine 176 carries the phosphoserine modification.

As to quaternary structure, interacts with GNAZ, GNAI1 and GNAI3. Associates specifically with the activated, GTP-bound forms of GNAZ and GNAI3.

It is found in the cytoplasm. The protein localises to the cytosol. It localises to the nucleus. Its function is as follows. Regulates G protein-coupled receptor signaling cascades, including signaling downstream of the muscarinic acetylcholine receptor CHRM2. Inhibits signal transduction by increasing the GTPase activity of G protein alpha subunits, thereby driving them into their inactive GDP-bound form. Modulates the activity of potassium channels that are activated in response to CHRM2 signaling. Activity on GNAZ is inhibited by palmitoylation of the G-protein. This Mus musculus (Mouse) protein is Regulator of G-protein signaling 10 (Rgs10).